Here is a 481-residue protein sequence, read N- to C-terminus: Aspartyl/glutamyl-tRNA(Asn/Gln) amidotransferase subunit B (481 aa).

Belongs to the GatB/GatE family. GatB subfamily. In terms of assembly, heterotrimer of A, B and C subunits.

The catalysed reaction is L-glutamyl-tRNA(Gln) + L-glutamine + ATP + H2O = L-glutaminyl-tRNA(Gln) + L-glutamate + ADP + phosphate + H(+). It catalyses the reaction L-aspartyl-tRNA(Asn) + L-glutamine + ATP + H2O = L-asparaginyl-tRNA(Asn) + L-glutamate + ADP + phosphate + 2 H(+). Its function is as follows. Allows the formation of correctly charged Asn-tRNA(Asn) or Gln-tRNA(Gln) through the transamidation of misacylated Asp-tRNA(Asn) or Glu-tRNA(Gln) in organisms which lack either or both of asparaginyl-tRNA or glutaminyl-tRNA synthetases. The reaction takes place in the presence of glutamine and ATP through an activated phospho-Asp-tRNA(Asn) or phospho-Glu-tRNA(Gln). The sequence is that of Aspartyl/glutamyl-tRNA(Asn/Gln) amidotransferase subunit B from Ectopseudomonas mendocina (strain ymp) (Pseudomonas mendocina).